A 369-amino-acid polypeptide reads, in one-letter code: Cobalt-precorrin-5B C(1)-methyltransferase (369 aa).

Belongs to the CbiD family.

It carries out the reaction Co-precorrin-5B + S-adenosyl-L-methionine = Co-precorrin-6A + S-adenosyl-L-homocysteine. It functions in the pathway cofactor biosynthesis; adenosylcobalamin biosynthesis; cob(II)yrinate a,c-diamide from sirohydrochlorin (anaerobic route): step 6/10. Its function is as follows. Catalyzes the methylation of C-1 in cobalt-precorrin-5B to form cobalt-precorrin-6A. This Leptospira borgpetersenii serovar Hardjo-bovis (strain JB197) protein is Cobalt-precorrin-5B C(1)-methyltransferase.